Consider the following 504-residue polypeptide: Signal transduction histidine-protein kinase/phosphatase MprB (504 aa).

Topologically, residues M1–L26 are cytoplasmic. A helical transmembrane segment spans residues L27–I47. Residues S48–R163 are Extracellular-facing. The chain crosses the membrane as a helical span at residues W164–V184. The Cytoplasmic portion of the chain corresponds to T185–T504. The 53-residue stretch at R186–E238 folds into the HAMP domain. Residues D246–R466 enclose the Histidine kinase domain. Residue H249 is modified to Phosphohistidine; by autocatalysis. The disordered stretch occupies residues Q471 to T504. Polar residues predominate over residues S487–T504.

It depends on Mg(2+) as a cofactor. Mn(2+) is required as a cofactor. In terms of processing, autophosphorylated.

Its subcellular location is the cell membrane. The catalysed reaction is ATP + protein L-histidine = ADP + protein N-phospho-L-histidine.. In terms of biological role, member of the two-component regulatory system MprB/MprA which contributes to maintaining a balance among several systems involved in stress resistance and is required for establishment and maintenance of persistent infection in the host. In response to environmental signals MprB acts both as a membrane-associated protein kinase that undergoes autophosphorylation and subsequently transfers the phosphate to MprA, and a protein phosphatase that dephosphorylates phospho-MprA. This Mycobacterium tuberculosis (strain ATCC 25177 / H37Ra) protein is Signal transduction histidine-protein kinase/phosphatase MprB (mprB).